The primary structure comprises 73 residues: MAFAPPLPIRRRKVLIPRPRSRFLLVTCPKCGNRQVVFSHSTFRARCLNCGEVLVEPTGGKARILGKIERIYG.

Zn(2+) is bound by residues Cys-28, Cys-31, Cys-47, and Cys-50. The C4-type zinc-finger motif lies at Cys-28–Cys-50.

This sequence belongs to the eukaryotic ribosomal protein eS27 family. As to quaternary structure, part of the 30S ribosomal subunit. It depends on Zn(2+) as a cofactor.

The sequence is that of Small ribosomal subunit protein eS27 from Aeropyrum pernix (strain ATCC 700893 / DSM 11879 / JCM 9820 / NBRC 100138 / K1).